The sequence spans 290 residues: MFKGSMPALVTPFRNGELDLEALKRLVEWQIGEGSTGLVPVGTTGESPTLSHEEHETVVAEVVKAAAGRVPVIAGAGSNNTTEAIRFVQFAQRIGADAALVVTPYYNRPTQRGLIAHFTALHDCAEIPIVIYNIPGRSVVDMTPATMGALAKLPRIVGVKDATGDLARVSQQRASCGADFIQLSGEDATALGFNAHGGVGCISVTANVAPRLCAEFQQATLAGDYAKALDYQDRLMPLHEAIFIEPGLVGAKYALSKLGLCSEEVRSPLTGLEDSTKAAIDAAMKHAGLL.

Residue Thr44 participates in pyruvate binding. Tyr132 acts as the Proton donor/acceptor in catalysis. The Schiff-base intermediate with substrate role is filled by Lys160. Ile202 contacts pyruvate.

This sequence belongs to the DapA family. As to quaternary structure, homotetramer; dimer of dimers.

The protein resides in the cytoplasm. The enzyme catalyses L-aspartate 4-semialdehyde + pyruvate = (2S,4S)-4-hydroxy-2,3,4,5-tetrahydrodipicolinate + H2O + H(+). The protein operates within amino-acid biosynthesis; L-lysine biosynthesis via DAP pathway; (S)-tetrahydrodipicolinate from L-aspartate: step 3/4. Catalyzes the condensation of (S)-aspartate-beta-semialdehyde [(S)-ASA] and pyruvate to 4-hydroxy-tetrahydrodipicolinate (HTPA). This chain is 4-hydroxy-tetrahydrodipicolinate synthase, found in Ruegeria pomeroyi (strain ATCC 700808 / DSM 15171 / DSS-3) (Silicibacter pomeroyi).